A 223-amino-acid chain; its full sequence is MIFAANLKCNHTRASFKIYAEILNKTMGAKCDDIIVFPPSVAFLENENNFMQGAQNFYPCVNGAFTGELGKEHLDEFGIKCVLIGHSERRALGDEELIKVKFNFAKEHGYKIIFCIGENLDTKNSGKTLEFLKKQLEIIDLNYEKLIIAYEPIYSIGTGVSAQTADIAKVLEFLASLTKVPLLYGGSVNENNIKEILSVNHCGGVLIGSAALKVENFIKLIKG.

6 to 8 serves as a coordination point for substrate; sequence NLK. His-86 (electrophile) is an active-site residue. Glu-151 serves as the catalytic Proton acceptor. 2 residues coordinate substrate: Gly-157 and Ser-187.

It belongs to the triosephosphate isomerase family. In terms of assembly, homodimer.

It is found in the cytoplasm. The catalysed reaction is D-glyceraldehyde 3-phosphate = dihydroxyacetone phosphate. It participates in carbohydrate biosynthesis; gluconeogenesis. Its pathway is carbohydrate degradation; glycolysis; D-glyceraldehyde 3-phosphate from glycerone phosphate: step 1/1. Functionally, involved in the gluconeogenesis. Catalyzes stereospecifically the conversion of dihydroxyacetone phosphate (DHAP) to D-glyceraldehyde-3-phosphate (G3P). This chain is Triosephosphate isomerase, found in Campylobacter jejuni subsp. doylei (strain ATCC BAA-1458 / RM4099 / 269.97).